The primary structure comprises 121 residues: Large ribosomal subunit protein uL22 (121 aa).

The protein belongs to the universal ribosomal protein uL22 family. Part of the 50S ribosomal subunit.

In terms of biological role, this protein binds specifically to 23S rRNA; its binding is stimulated by other ribosomal proteins, e.g. L4, L17, and L20. It is important during the early stages of 50S assembly. It makes multiple contacts with different domains of the 23S rRNA in the assembled 50S subunit and ribosome. Its function is as follows. The globular domain of the protein is located near the polypeptide exit tunnel on the outside of the subunit, while an extended beta-hairpin is found that lines the wall of the exit tunnel in the center of the 70S ribosome. The polypeptide is Large ribosomal subunit protein uL22 (Pseudarthrobacter chlorophenolicus (strain ATCC 700700 / DSM 12829 / CIP 107037 / JCM 12360 / KCTC 9906 / NCIMB 13794 / A6) (Arthrobacter chlorophenolicus)).